The primary structure comprises 638 residues: Growth hormone receptor (638 aa).

The N-terminal stretch at M1–A18 is a signal peptide. Over V19–Q264 the chain is Extracellular. 2 disulfides stabilise this stretch: C56/C66 and C101/C112. A glycan (N-linked (GlcNAc...) asparagine) is linked at N115. Cysteines 126 and 140 form a disulfide. Residues P151–M254 form the Fibronectin type-III domain. N-linked (GlcNAc...) asparagine glycans are attached at residues N156, N161, and N200. The short motif at Y240–S244 is the WSXWS motif element. A helical membrane pass occupies residues F265–S288. Over K289–P638 the chain is Cytoplasmic. The required for JAK2 binding stretch occupies residues K294–A379. The Box 1 motif signature appears at I297–K305. The UbE motif signature appears at D340–D349. S341 bears the Phosphoserine mark. A compositionally biased stretch (polar residues) spans K429–P446. The disordered stretch occupies residues K429–V448. Residues Y487 and Y595 each carry the phosphotyrosine modification.

The protein belongs to the type I cytokine receptor family. Type 1 subfamily. As to quaternary structure, on growth hormone (GH) binding, forms homodimers and binds JAK2 via a box 1-containing domain. In terms of processing, the soluble form (GHBP) is produced by phorbol ester-promoted proteolytic cleavage at the cell surface (shedding) by ADAM17/TACE. Shedding is inhibited by growth hormone (GH) binding to the receptor probably due to a conformational change in GHR rendering the receptor inaccessible to ADAM17. Post-translationally, on GH binding, phosphorylated on tyrosine residues in the cytoplasmic domain by JAK2. Ubiquitinated by the ECS(SOCS2) complex following ligand-binding and phosphorylation by JAK2, leading to its degradation by the proteasome. Regulation by the ECS(SOCS2) complex acts as a negative feedback loop of growth hormone receptor signaling. Ubiquitination is not sufficient for GHR internalization.

The protein resides in the cell membrane. It is found in the secreted. Functionally, receptor for pituitary gland growth hormone (GH1) involved in regulating postnatal body growth. On ligand binding, couples to the JAK2/STAT5 pathway. The soluble form (GHBP) acts as a reservoir of growth hormone in plasma and may be a modulator/inhibitor of GH signaling. The chain is Growth hormone receptor (GHR) from Ailuropoda melanoleuca (Giant panda).